The primary structure comprises 382 residues: 2-carboxy-1,4-naphthoquinone phytyltransferase, chloroplastic (382 aa).

A chloroplast-targeting transit peptide spans 1 to 66; the sequence is MVNFVSLCDI…RRNLRVRPIF (66 aa). A run of 8 helical transmembrane segments spans residues 99–119, 123–143, 168–188, 196–216, 224–244, 257–277, 323–343, and 361–381; these read VALVPLTVGASAAYLETGLFL, YVTLLLSSILIITWLNLSNDV, TLAAAITSLALGVSGLVWTSL, ILLLASAILCGYVYQCPPFRL, PLCFAAFGPFATTAFYLLLGS, VLSSSVLVGFTTSLILFCSHF, ILPLPCTLMCFLTLPVGNLVS, and YYCVRLHALLGAALSLGLVIA.

Belongs to the MenA family. Type 2 subfamily.

The protein resides in the plastid. It is found in the chloroplast membrane. The enzyme catalyses 2-carboxy-1,4-naphthoquinone + phytyl diphosphate + H(+) = demethylphylloquinone + CO2 + diphosphate. Involved in the synthesis of phylloquinone (vitamin K1). Catalyzes the transfer of a prenyl chain to 2-carboxy-1,4-naphthoquinone. This chain is 2-carboxy-1,4-naphthoquinone phytyltransferase, chloroplastic (ABC4), found in Arabidopsis thaliana (Mouse-ear cress).